We begin with the raw amino-acid sequence, 396 residues long: RNA polymerase principal sigma factor HrdA (396 aa).

Over residues 1–20 the composition is skewed to basic residues; sequence MRGGQRRASRLRPPTYRRRP. Residues 1 to 96 form a disordered region; it reads MRGGQRRASR…PTRTESGGPS (96 aa). Composition is skewed to low complexity over residues 33–42 and 56–75; these read QTQTLTQTDT and LLAM…PGAP. The Polymerase core binding signature appears at 187-200; sequence DLVQEGNLGLIRAV. Positions 357–376 form a DNA-binding region, H-T-H motif; it reads LEEIGRLFGVTRERIRQIES.

This sequence belongs to the sigma-70 factor family. As to quaternary structure, interacts transiently with the RNA polymerase catalytic core. Interacts with RNA polymerase-binding protein RbpA.

Functionally, sigma factors are initiation factors that promote the attachment of RNA polymerase to specific initiation sites and are then released. This chain is RNA polymerase principal sigma factor HrdA (hrdA), found in Streptomyces coelicolor (strain ATCC BAA-471 / A3(2) / M145).